Here is a 779-residue protein sequence, read N- to C-terminus: Glutathione biosynthesis bifunctional protein GshAB (779 aa).

The interval 1-346 (MAFSKNILDS…ETANRNQEQA (346 aa)) is glutamate--cysteine ligase. The ATP-grasp domain occupies 512–768 (KKILDQAGIN…LDDKILDALG (257 aa)). 539-597 (PYYRGRAIVIKPKSTNFGIGITIIKENNRHDFFAQGIAQAFKHEATVLIENFSSGKEYR) contributes to the ATP binding site. Mg(2+)-binding residues include aspartate 719, glutamate 738, and asparagine 740. Residues aspartate 719, glutamate 738, and asparagine 740 each contribute to the Mn(2+) site.

This sequence in the N-terminal section; belongs to the glutamate--cysteine ligase type 1 family. Type 2 subfamily. In terms of assembly, monomer. Mg(2+) is required as a cofactor. Requires Mn(2+) as cofactor.

The catalysed reaction is L-cysteine + L-glutamate + ATP = gamma-L-glutamyl-L-cysteine + ADP + phosphate + H(+). The enzyme catalyses gamma-L-glutamyl-L-cysteine + glycine + ATP = glutathione + ADP + phosphate + H(+). It functions in the pathway sulfur metabolism; glutathione biosynthesis; glutathione from L-cysteine and L-glutamate: step 1/2. Its pathway is sulfur metabolism; glutathione biosynthesis; glutathione from L-cysteine and L-glutamate: step 2/2. In terms of biological role, synthesizes glutathione from L-glutamate and L-cysteine via gamma-L-glutamyl-L-cysteine. In Desulfotalea psychrophila (strain LSv54 / DSM 12343), this protein is Glutathione biosynthesis bifunctional protein GshAB.